We begin with the raw amino-acid sequence, 331 residues long: 3-dehydrosphinganine reductase TSC10B (331 aa).

Residues 1–7 (MAAIFSL) are Lumenal-facing. The chain crosses the membrane as a helical span at residues 8–28 (FLFFILFIVSLLIILSFIVRP). Over 29 to 262 (RSVTIPIKFR…ICFDGIKAGK (234 aa)) the chain is Cytoplasmic. NADPH-binding residues include Gly44, Ser46, Ser47, Gly48, Arg69, Lys73, and Asp95. The GXSXG signature appears at 44–48 (GGSSG). Ser172 serves as the catalytic Proton donor. The active-site Proton acceptor is the Tyr186. 2 residues coordinate NADP(+): Tyr186 and Lys190. Lys190 acts as the Lowers pKa of active site Tyr in catalysis. The helical transmembrane segment at 263–283 (FTVTCHFIGFLLSIASTGMSP) threads the bilayer. Residues 284-286 (QGS) lie on the Lumenal side of the membrane. A helical transmembrane segment spans residues 287 to 307 (FWLALTEVMFGGLIRLASLVF). The Cytoplasmic segment spans residues 308-331 (QWQWYKTIEKWSQRNKKEVNSKLA).

It belongs to the short-chain dehydrogenases/reductases (SDR) family. Expressed in roots, leaves, stems and flowers.

It is found in the endoplasmic reticulum membrane. The enzyme catalyses sphinganine + NADP(+) = 3-oxosphinganine + NADPH + H(+). It functions in the pathway lipid metabolism; sphingolipid metabolism. Functionally, catalyzes the reduction of 3'-oxosphinganine (3-ketodihydrosphingosine/KDS) to sphinganine (dihydrosphingosine/DHS), the second step of de novo sphingolipid biosynthesis. In plants, sphingolipids seems to play a critical role in mineral ion homeostasis, most likely through their involvement in the ion transport functionalities of membrane systems in the root. Is stereospecific for D-erythro-DHS production and does not produce L-threo-DHS. This is 3-dehydrosphinganine reductase TSC10B (TSC10B) from Arabidopsis thaliana (Mouse-ear cress).